Reading from the N-terminus, the 457-residue chain is Mesentericin Y105 secretion protein MesE (457 aa).

The chain crosses the membrane as a helical span at residues 22 to 42 (TLIIVPIFLLVVFIVLFSLFA).

Belongs to the membrane fusion protein (MFP) (TC 8.A.1) family.

It localises to the membrane. Functionally, involved in the secretion of mesentericin Y105. This Leuconostoc mesenteroides protein is Mesentericin Y105 secretion protein MesE (mesE).